The primary structure comprises 653 residues: Alpha-L-iduronidase (653 aa).

Positions 1 to 27 (MRPLRPRAALLALLASLLAAPPVAPAE) are cleaved as a signal peptide. Alpha-D-mannopyranose-binding residues include Pro-54, Leu-56, and His-58. His-91 contributes to the alpha-L-iduronate binding site. A glycan (N-linked (GlcNAc...) asparagine) is linked at Asn-110. Alpha-L-iduronate-binding residues include Asn-181 and Glu-182. Glu-182 (proton donor) is an active-site residue. N-linked (GlcNAc...) asparagine glycosylation occurs at Asn-190. Alpha-L-iduronate is bound by residues Lys-264, Glu-299, and Gly-305. Glu-299 functions as the Nucleophile in the catalytic mechanism. Trp-306 serves as a coordination point for alpha-D-mannopyranose. The N-linked (GlcNAc...) asparagine glycan is linked to Asn-336. Positions 349 and 363 each coordinate alpha-L-iduronate. Residues Asn-372, Asn-415, and Asn-451 are each glycosylated (N-linked (GlcNAc...) asparagine). Residues Arg-488 and Arg-492 each contribute to the alpha-D-mannopyranose site. Arg-492 contacts beta-D-mannose. Cysteines 541 and 577 form a disulfide.

It belongs to the glycosyl hydrolase 39 family. As to quaternary structure, monomer. N-glycosylation at Asn-372 contributes to substrate binding and is required for full enzymatic activity. Ubiquitous.

Its subcellular location is the lysosome. The catalysed reaction is Hydrolysis of unsulfated alpha-L-iduronosidic linkages in dermatan sulfate.. The polypeptide is Alpha-L-iduronidase (IDUA) (Homo sapiens (Human)).